A 75-amino-acid polypeptide reads, in one-letter code: Penaeidin-3m (75 aa).

The signal sequence occupies residues 1–19 (MRLVVCLVFLASFALVCQG). Residue Gln20 is modified to Pyrrolidone carboxylic acid. Disulfide bonds link Cys44–Cys59, Cys48–Cys66, and Cys60–Cys67. Ser74 bears the Serine amide mark.

Belongs to the penaeidin family.

It is found in the cytoplasmic granule. Its function is as follows. Antibacterial and antifungal activity. Presents chitin-binding activity. This Penaeus setiferus (Atlantic white shrimp) protein is Penaeidin-3m.